A 105-amino-acid chain; its full sequence is Large ribosomal subunit protein uL24 (105 aa).

The disordered stretch occupies residues 67-105 (HISNLNPVDPKTGKATRIGRRKSSEGTLVRYSKKSGEEI).

It belongs to the universal ribosomal protein uL24 family. As to quaternary structure, part of the 50S ribosomal subunit.

Its function is as follows. One of two assembly initiator proteins, it binds directly to the 5'-end of the 23S rRNA, where it nucleates assembly of the 50S subunit. One of the proteins that surrounds the polypeptide exit tunnel on the outside of the subunit. The protein is Large ribosomal subunit protein uL24 of Bacteroides thetaiotaomicron (strain ATCC 29148 / DSM 2079 / JCM 5827 / CCUG 10774 / NCTC 10582 / VPI-5482 / E50).